A 196-amino-acid polypeptide reads, in one-letter code: 3-isopropylmalate dehydratase small subunit (196 aa).

It belongs to the LeuD family. LeuD type 1 subfamily. In terms of assembly, heterodimer of LeuC and LeuD.

It catalyses the reaction (2R,3S)-3-isopropylmalate = (2S)-2-isopropylmalate. Its pathway is amino-acid biosynthesis; L-leucine biosynthesis; L-leucine from 3-methyl-2-oxobutanoate: step 2/4. Catalyzes the isomerization between 2-isopropylmalate and 3-isopropylmalate, via the formation of 2-isopropylmaleate. The protein is 3-isopropylmalate dehydratase small subunit of Corynebacterium efficiens (strain DSM 44549 / YS-314 / AJ 12310 / JCM 11189 / NBRC 100395).